Consider the following 212-residue polypeptide: Small ribosomal subunit protein uS4c (212 aa).

The S4 RNA-binding domain occupies 89–152; it reads MRLDNIIFRL…RSRALVDKNL (64 aa).

It belongs to the universal ribosomal protein uS4 family. In terms of assembly, part of the 30S ribosomal subunit. Contacts protein S5. The interaction surface between S4 and S5 is involved in control of translational fidelity.

It is found in the plastid. It localises to the chloroplast. In terms of biological role, one of the primary rRNA binding proteins, it binds directly to 16S rRNA where it nucleates assembly of the body of the 30S subunit. With S5 and S12 plays an important role in translational accuracy. This is Small ribosomal subunit protein uS4c (rps4) from Staurastrum punctulatum (Green alga).